Here is a 224-residue protein sequence, read N- to C-terminus: Viral late gene transcription factor 3 (224 aa).

A zinc finger spans residues 6–26 (CSGCRHNGIVSEQGYEYCIFC).

The protein belongs to the orthopoxvirus VLTF-3/OPG127 family. In terms of assembly, interacts with the late transcription elongation factor VLTF-4/OPG110. Interacts with the late transcription factors VLTF-1/OPG093.

In terms of biological role, acts with RNA polymerase to initiate transcription from late gene promoters. The sequence is that of Viral late gene transcription factor 3 (OPG127) from Vaccinia virus (strain Ankara) (VACV).